The chain runs to 133 residues: Small ribosomal subunit protein uS8 (133 aa).

The interval 1-30 (MANHDPISDMLTRIRNASEKRHETTKVPAS) is disordered. The span at 16–25 (NASEKRHETT) shows a compositional bias: basic and acidic residues.

It belongs to the universal ribosomal protein uS8 family. Part of the 30S ribosomal subunit. Contacts proteins S5 and S12.

One of the primary rRNA binding proteins, it binds directly to 16S rRNA central domain where it helps coordinate assembly of the platform of the 30S subunit. This Synechococcus sp. (strain CC9902) protein is Small ribosomal subunit protein uS8.